We begin with the raw amino-acid sequence, 461 residues long: Pyruvate kinase (461 aa).

R46 is a substrate binding site. K(+) is bound by residues N48 and D80. ATP is bound at residue 48–51 (NLAH). The ATP site is built by R87 and K165. E232 is a binding site for Mg(2+). The substrate site is built by G255, D256, and T288. D256 provides a ligand contact to Mg(2+).

This sequence belongs to the pyruvate kinase family. As to quaternary structure, homotetramer. A divalent metal cation serves as cofactor.

The enzyme catalyses pyruvate + ATP = phosphoenolpyruvate + ADP + H(+). It functions in the pathway carbohydrate degradation; glycolysis; pyruvate from D-glyceraldehyde 3-phosphate: step 5/5. With respect to regulation, not activated by classical allosteric effectors. This is Pyruvate kinase (pyk) from Pyrobaculum aerophilum (strain ATCC 51768 / DSM 7523 / JCM 9630 / CIP 104966 / NBRC 100827 / IM2).